The sequence spans 418 residues: Putative ion-transport protein YfeO (418 aa).

Helical transmembrane passes span 10–30 (LLLSLPAVAIGIASSLILIVV), 54–74 (DSPFWIIAILTLTGIAVGLVI), 99–119 (ALLGLIVALILGLAGGVSLGP), 120–140 (EHPIMTVNIALAVAIGARLLP), 149–169 (ILASAGTIGALFGTPVAAALI), 186–206 (LFAPLMAAAAGALTTGLFFHP), 223–243 (ILSGAIVAAIAIAAGMVAVWC), 258–278 (VLVLGIGGFILGILGVMGGPV), 300–320 (DYFLLAVIKLAALVVAAASGF), 322–342 (GGRIFPAVFVGVALGLMLHEH), 343–363 (VPAVPAAITVSCAILGIVLVV), and 371–391 (LFMAAVVVPNTTLLPLLCIVM).

It belongs to the chloride channel (TC 2.A.49) family.

It localises to the cell membrane. This is Putative ion-transport protein YfeO from Escherichia coli O17:K52:H18 (strain UMN026 / ExPEC).